The sequence spans 370 residues: Anhydro-N-acetylmuramic acid kinase (370 aa).

Residue 13–20 (GTSMDGID) participates in ATP binding.

Belongs to the anhydro-N-acetylmuramic acid kinase family.

The enzyme catalyses 1,6-anhydro-N-acetyl-beta-muramate + ATP + H2O = N-acetyl-D-muramate 6-phosphate + ADP + H(+). It participates in amino-sugar metabolism; 1,6-anhydro-N-acetylmuramate degradation. Its pathway is cell wall biogenesis; peptidoglycan recycling. In terms of biological role, catalyzes the specific phosphorylation of 1,6-anhydro-N-acetylmuramic acid (anhMurNAc) with the simultaneous cleavage of the 1,6-anhydro ring, generating MurNAc-6-P. Is required for the utilization of anhMurNAc either imported from the medium or derived from its own cell wall murein, and thus plays a role in cell wall recycling. The protein is Anhydro-N-acetylmuramic acid kinase of Rhizobium etli (strain ATCC 51251 / DSM 11541 / JCM 21823 / NBRC 15573 / CFN 42).